A 1235-amino-acid polypeptide reads, in one-letter code: Structural maintenance of chromosomes protein 1B (1235 aa).

32–39 provides a ligand contact to ATP; that stretch reads GPNGSGKS. Positions 156-490 form a coiled coil; sequence EEISTSGELI…RSELQNAGID (335 aa). An SMC hinge domain is found at 514 to 629; the sequence is SVFGRLFDLC…ETMEEARHIA (116 aa). N6-acetyllysine occurs at positions 648 and 713. 3 coiled-coil regions span residues 666–934, 970–994, and 1022–1049; these read WDEK…LDCK, EKEEAFEIDYSSLKEDLKALQSDQE, and RALENLKTVRDKFQESTDAFEASRKEAR. Lysine 1033 is modified (N6-acetyllysine).

It belongs to the SMC family. SMC1 subfamily. As to quaternary structure, forms a heterodimer with SMC3. Component of a meiosis-specific cohesin complex, probably composed of the SMC1B and SMC3 heterodimer attached via their SMC hinge domain, RAD21 (or its meiosis-specific related protein REC8), which link them, and STAG3, which interacts with RAD21 or REC8. The cohesin complex interacts with the cohesin loading complex subunits NIPBL/Scc2 (via HEAT repeats) and MAU2/Scc4. NIPBL directly contacts all members of the complex, RAD21, SMC1A/B, SMC3 and STAG1.

It localises to the nucleus. Its subcellular location is the chromosome. The protein localises to the centromere. In terms of biological role, meiosis-specific component of cohesin complex. Required for the maintenance of meiotic cohesion, but not, or only to a minor extent, for its establishment. Contributes to axial element (AE) formation and the organization of chromatin loops along the AE. Plays a key role in synapsis, recombination and chromosome movements. The cohesin complex is required for the cohesion of sister chromatids after DNA replication. The cohesin complex apparently forms a large proteinaceous ring within which sister chromatids can be trapped. At anaphase, the complex is cleaved and dissociates from chromatin, allowing sister chromatids to segregate. The meiosis-specific cohesin complex probably replaces mitosis specific cohesin complex when it dissociates from chromatin during prophase I. In Homo sapiens (Human), this protein is Structural maintenance of chromosomes protein 1B (SMC1B).